The primary structure comprises 135 residues: NADH-quinone oxidoreductase subunit K (135 aa).

The next 3 membrane-spanning stretches (helical) occupy residues 33–53 (VLGL…FAIG), 63–83 (FLFM…AFVV), and 95–115 (IMFI…LAIL).

The protein belongs to the complex I subunit 4L family. As to quaternary structure, NDH-1 is composed of 14 different subunits. Subunits NuoA, H, J, K, L, M, N constitute the membrane sector of the complex.

The protein resides in the cell inner membrane. The enzyme catalyses a quinone + NADH + 5 H(+)(in) = a quinol + NAD(+) + 4 H(+)(out). In terms of biological role, NDH-1 shuttles electrons from NADH, via FMN and iron-sulfur (Fe-S) centers, to quinones in the respiratory chain. The immediate electron acceptor for the enzyme in this species is believed to be ubiquinone. Couples the redox reaction to proton translocation (for every two electrons transferred, four hydrogen ions are translocated across the cytoplasmic membrane), and thus conserves the redox energy in a proton gradient. The polypeptide is NADH-quinone oxidoreductase subunit K (Psychrobacter arcticus (strain DSM 17307 / VKM B-2377 / 273-4)).